Consider the following 151-residue polypeptide: Single-stranded DNA-binding protein, mitochondrial (151 aa).

The N-terminal 16 residues, 1 to 16 (MFRRPVLQVFRQFVRQ), are a transit peptide targeting the mitochondrion. One can recognise an SSB domain in the interval 30–141 (LNRVQLLGRV…IIADNIIFLS (112 aa)). Residues S67 and S79 each carry the phosphoserine modification. The residue at position 113 (K113) is an N6-acetyllysine. K122 carries the post-translational modification N6-succinyllysine.

As to quaternary structure, homotetramer. Interacts with MPG/AAG, through inhibition of its glycosylase activity it potentially prevents formation of DNA breaks in ssDNA, ensuring that base removal primarily occurs in dsDNA. Interacts with POLDIP2. Interacts with PRIMPOL.

The protein resides in the mitochondrion. It is found in the mitochondrion matrix. It localises to the mitochondrion nucleoid. Functionally, binds preferentially and cooperatively to pyrimidine rich single-stranded DNA (ss-DNA). In vitro, required to maintain the copy number of mitochondrial DNA (mtDNA) and plays a crucial role during mtDNA replication by stimulating the activity of the replisome components POLG and TWNK at the replication fork. Promotes the activity of the gamma complex polymerase POLG, largely by organizing the template DNA and eliminating secondary structures to favor ss-DNA conformations that facilitate POLG activity. In addition it is able to promote the 5'-3' unwinding activity of the mtDNA helicase TWNK. May also function in mtDNA repair. The sequence is that of Single-stranded DNA-binding protein, mitochondrial (Ssbp1) from Rattus norvegicus (Rat).